An 887-amino-acid chain; its full sequence is Alanine--tRNA ligase (887 aa).

Residues 425–441 (MQEQKSRARSDRREKQQ) are compositionally biased toward basic and acidic residues. The disordered stretch occupies residues 425-448 (MQEQKSRARSDRREKQQTGDGAGS). Residues His569, His573, Cys672, and His676 each contribute to the Zn(2+) site.

Belongs to the class-II aminoacyl-tRNA synthetase family. It depends on Zn(2+) as a cofactor.

It is found in the cytoplasm. The enzyme catalyses tRNA(Ala) + L-alanine + ATP = L-alanyl-tRNA(Ala) + AMP + diphosphate. Catalyzes the attachment of alanine to tRNA(Ala) in a two-step reaction: alanine is first activated by ATP to form Ala-AMP and then transferred to the acceptor end of tRNA(Ala). Also edits incorrectly charged Ser-tRNA(Ala) and Gly-tRNA(Ala) via its editing domain. The sequence is that of Alanine--tRNA ligase from Chlorobium luteolum (strain DSM 273 / BCRC 81028 / 2530) (Pelodictyon luteolum).